The sequence spans 410 residues: Cysteine desulfurase IscS (410 aa).

Pyridoxal 5'-phosphate is bound by residues 80–81 (AT), Asn160, Gln188, and 208–210 (SGH). Lys211 is modified (N6-(pyridoxal phosphate)lysine). Position 248 (Thr248) interacts with pyridoxal 5'-phosphate. The active-site Cysteine persulfide intermediate is the Cys334. Cys334 is a binding site for [2Fe-2S] cluster.

The protein belongs to the class-V pyridoxal-phosphate-dependent aminotransferase family. NifS/IscS subfamily. Homodimer. Forms a heterotetramer with IscU, interacts with other sulfur acceptors. The cofactor is pyridoxal 5'-phosphate.

It localises to the cytoplasm. It carries out the reaction (sulfur carrier)-H + L-cysteine = (sulfur carrier)-SH + L-alanine. It participates in cofactor biosynthesis; iron-sulfur cluster biosynthesis. Master enzyme that delivers sulfur to a number of partners involved in Fe-S cluster assembly, tRNA modification or cofactor biosynthesis. Catalyzes the removal of elemental sulfur atoms from cysteine to produce alanine. Functions as a sulfur delivery protein for Fe-S cluster synthesis onto IscU, an Fe-S scaffold assembly protein, as well as other S acceptor proteins. This Rickettsia massiliae (strain Mtu5) protein is Cysteine desulfurase IscS.